Reading from the N-terminus, the 38-residue chain is Mu/omega-theraphotoxin-Mb1b (38 aa).

Intrachain disulfides connect C7–C21, C14–C26, and C20–C33. Serine amide is present on S38.

This sequence belongs to the neurotoxin 10 (Hwtx-1) family. 28 (Jztx-11) subfamily. Expressed by the venom gland.

The protein resides in the secreted. Paralytic toxin on insects that inhibits voltage-gated sodium (Nav) and calcium (Cav) channels in P.americana (American cockroach) dorsal unpaired median (DUM) neurons, and also inhibits the B.germanica (German cockroach) Nav channel (BgNaV1). May act as a gating-modifier toxin on Nav and as a pore blocker on Cav. In vivo, reversibly paralyzes both L.cuprina (Australian sheep blowfly) and M.domestica (housefly), but does not affect larvae of H.armigera (cotton bollworms). The chain is Mu/omega-theraphotoxin-Mb1b from Monocentropus balfouri (Socotra Island blue baboon tarantula).